The primary structure comprises 402 residues: MTPSNYQRTRWLTLIGTIITQFALGSVYTWSLFNGALSAKLDAPVSQVAFSFGLLSLGLAISSSVAGKLQERFGVKRVTMASGILLGLGFFLTAHSDNLMMLWLSAGVLVGLADGAGYLLTLSNCVKWFPERKGLISAFAIGSYGLGSLGFKFIDTQLLETVGLEKTFVIWGAIALLMIVFGATLMKDAPKQEVKTSNGVVEKDYTLAESMRKPQYWMLAVMFLTACMSGLYVIGVAKDIAQSLAHLDVVSAANAVTVISIANLSGRLVLGILSDKIARIRVITIGQVISLVGMAALLFAPLNAVTFFAAIACVAFNFGGTITVFPSLVSEFFGLNNLAKNYGVIYLGFGIGSICGSIIASLFGGFYVTFYVIFALLILSLALSTTIRQPEQKMLREAHGSL.

The Cytoplasmic segment spans residues 1-11; that stretch reads MTPSNYQRTRW. A helical transmembrane segment spans residues 12 to 34; the sequence is LTLIGTIITQFALGSVYTWSLFN. Over 35–43 the chain is Periplasmic; it reads GALSAKLDA. The helical transmembrane segment at 44 to 66 threads the bilayer; that stretch reads PVSQVAFSFGLLSLGLAISSSVA. Over 67-72 the chain is Cytoplasmic; it reads GKLQER. Residues 73 to 95 form a helical membrane-spanning segment; sequence FGVKRVTMASGILLGLGFFLTAH. Residues 96–99 lie on the Periplasmic side of the membrane; sequence SDNL. A helical transmembrane segment spans residues 100–122; it reads MMLWLSAGVLVGLADGAGYLLTL. The Cytoplasmic segment spans residues 123–134; it reads SNCVKWFPERKG. A helical transmembrane segment spans residues 135-154; it reads LISAFAIGSYGLGSLGFKFI. Topologically, residues 155-168 are periplasmic; that stretch reads DTQLLETVGLEKTF. A helical membrane pass occupies residues 169–186; it reads VIWGAIALLMIVFGATLM. Over 187–216 the chain is Cytoplasmic; it reads KDAPKQEVKTSNGVVEKDYTLAESMRKPQY. A helical transmembrane segment spans residues 217–236; the sequence is WMLAVMFLTACMSGLYVIGV. Topologically, residues 237–250 are periplasmic; that stretch reads AKDIAQSLAHLDVV. The chain crosses the membrane as a helical span at residues 251 to 273; that stretch reads SAANAVTVISIANLSGRLVLGIL. Residues 274 to 279 are Cytoplasmic-facing; it reads SDKIAR. The helical transmembrane segment at 280–302 threads the bilayer; it reads IRVITIGQVISLVGMAALLFAPL. The Periplasmic portion of the chain corresponds to 303–306; sequence NAVT. The helical transmembrane segment at 307–329 threads the bilayer; the sequence is FFAAIACVAFNFGGTITVFPSLV. Residues 330 to 341 lie on the Cytoplasmic side of the membrane; sequence SEFFGLNNLAKN. The chain crosses the membrane as a helical span at residues 342 to 364; it reads YGVIYLGFGIGSICGSIIASLFG. The Periplasmic segment spans residues 365–367; that stretch reads GFY. A helical transmembrane segment spans residues 368 to 387; sequence VTFYVIFALLILSLALSTTI. The Cytoplasmic portion of the chain corresponds to 388–402; that stretch reads RQPEQKMLREAHGSL.

The protein belongs to the major facilitator superfamily. Interacts with BtsS and YpdA.

The protein localises to the cell inner membrane. Functionally, part of a nutrient-sensing regulatory network composed of the two-component regulatory systems BtsS/BtsR and YpdA/YpdB, and their respective target proteins, BtsT and YhjX. This is an uncharacterized protein from Escherichia coli (strain K12).